The sequence spans 313 residues: Protein-methionine-sulfoxide reductase catalytic subunit MsrP (313 aa).

The segment at residues 1-45 is a signal peptide (tat-type signal); that stretch reads MPAYRPPHIASSEITPKSFYLSRRNFLGTAAGLAAIGLAGREAIA. Residues Asn71, 74–75, Cys128, Thr163, Asn213, Arg218, and 229–231 each bind Mo-molybdopterin; these read YE and GIK.

Belongs to the MsrP family. Heterodimer of a catalytic subunit (MsrP) and a heme-binding subunit (MsrQ). It depends on Mo-molybdopterin as a cofactor. Post-translationally, predicted to be exported by the Tat system. The position of the signal peptide cleavage has not been experimentally proven.

The protein localises to the periplasm. It catalyses the reaction L-methionyl-[protein] + a quinone + H2O = L-methionyl-(S)-S-oxide-[protein] + a quinol. The catalysed reaction is L-methionyl-[protein] + a quinone + H2O = L-methionyl-(R)-S-oxide-[protein] + a quinol. Its function is as follows. Part of the MsrPQ system that repairs oxidized periplasmic proteins containing methionine sulfoxide residues (Met-O), using respiratory chain electrons. Thus protects these proteins from oxidative-stress damage caused by reactive species of oxygen and chlorine generated by the host defense mechanisms. MsrPQ is essential for the maintenance of envelope integrity under bleach stress, rescuing a wide series of structurally unrelated periplasmic proteins from methionine oxidation. The catalytic subunit MsrP is non-stereospecific, being able to reduce both (R-) and (S-) diastereoisomers of methionine sulfoxide. The chain is Protein-methionine-sulfoxide reductase catalytic subunit MsrP from Agrobacterium fabrum (strain C58 / ATCC 33970) (Agrobacterium tumefaciens (strain C58)).